The following is a 320-amino-acid chain: MGTPFKMERGVKYRDAAKTSIIPVKNIDPNQELLKKPEWMKIKLPANSAKIDSIKNGMRRHGLHSVCEEASCPNLHECFNHGTATFMILGAICTRRCPFCDVAHGKPLPPDPEEPRKLAETIQDMKLRYVVITSVDRDDLPDRGAGHFAECVKEIRQLNPNIKIEILVPDFRGRIEQALDKLKDNPPDVFNHNLENVPRLYREIRPGADYQWSLKLLKDFKAMFPHIPTKSGLMVGLGETNEEILQVMQDLRDHGVTMLTLGQYLQPSRHHLPVARYVPPAEFDEFRDKAQAMGFEHAACGPFVRSSYHADLQAKGEIVK.

The [4Fe-4S] cluster site is built by C67, C72, C78, C93, C97, C100, and S307. The Radical SAM core domain occupies 79 to 296; the sequence is FNHGTATFMI…RDKAQAMGFE (218 aa).

It belongs to the radical SAM superfamily. Lipoyl synthase family. [4Fe-4S] cluster is required as a cofactor.

It is found in the cytoplasm. It carries out the reaction [[Fe-S] cluster scaffold protein carrying a second [4Fe-4S](2+) cluster] + N(6)-octanoyl-L-lysyl-[protein] + 2 oxidized [2Fe-2S]-[ferredoxin] + 2 S-adenosyl-L-methionine + 4 H(+) = [[Fe-S] cluster scaffold protein] + N(6)-[(R)-dihydrolipoyl]-L-lysyl-[protein] + 4 Fe(3+) + 2 hydrogen sulfide + 2 5'-deoxyadenosine + 2 L-methionine + 2 reduced [2Fe-2S]-[ferredoxin]. It participates in protein modification; protein lipoylation via endogenous pathway; protein N(6)-(lipoyl)lysine from octanoyl-[acyl-carrier-protein]: step 2/2. Functionally, catalyzes the radical-mediated insertion of two sulfur atoms into the C-6 and C-8 positions of the octanoyl moiety bound to the lipoyl domains of lipoate-dependent enzymes, thereby converting the octanoylated domains into lipoylated derivatives. In Pasteurella multocida (strain Pm70), this protein is Lipoyl synthase.